Consider the following 828-residue polypeptide: G-type lectin S-receptor-like serine/threonine-protein kinase At2g19130 (828 aa).

Residues 1–22 form the signal peptide; that stretch reads MVSFLTLTSFFFICFFIHGSSA. One can recognise a Bulb-type lectin domain in the interval 23–146; that stretch reads VDTISGDFTL…GSSLSANVLW (124 aa). Topologically, residues 23 to 439 are extracellular; it reads VDTISGDFTL…GASGKSNNKG (417 aa). Residues N85, N113, N203, N234, N240, and N255 are each glycosylated (N-linked (GlcNAc...) asparagine). The region spanning 286 to 322 is the EGF-like domain; the sequence is PRQQCQVYRYCGSFGICSDKSEPFCRCPQGFRPMSQK. 4 disulfide bridges follow: C290–C302, C296–C310, C372–C394, and C376–C382. The region spanning 341–422 is the PAN domain; it reads CSRGDINQFF…EGNIFYLRLA (82 aa). The helical transmembrane segment at 440-460 threads the bilayer; the sequence is LIFGAVLGSLGVIVLVLLVVI. The Cytoplasmic segment spans residues 461–828; it reads LILRYRRRKR…KKMTNDNSSA (368 aa). The 278-residue stretch at 493 to 770 folds into the Protein kinase domain; that stretch reads KNFSDKLGGG…QVVQILEGVL (278 aa). ATP contacts are provided by residues 499–507 and K521; that span reads LGGGGFGSV. Position 527 is a phosphoserine (S527). The interval 582–600 is caM-binding; the sequence is VEEKIVLGWKLRFQIALGT. D619 functions as the Proton acceptor in the catalytic mechanism. Position 653 is a phosphothreonine (T653). The tract at residues 796–828 is disordered; it reads ESSSSSSHNSSQNHKHSSSSSSSKKMTNDNSSA. Over residues 797-828 the composition is skewed to low complexity; it reads SSSSSSHNSSQNHKHSSSSSSSKKMTNDNSSA. At S815 the chain carries Phosphoserine.

The protein belongs to the protein kinase superfamily. Ser/Thr protein kinase family.

It is found in the cell membrane. The catalysed reaction is L-seryl-[protein] + ATP = O-phospho-L-seryl-[protein] + ADP + H(+). It catalyses the reaction L-threonyl-[protein] + ATP = O-phospho-L-threonyl-[protein] + ADP + H(+). In Arabidopsis thaliana (Mouse-ear cress), this protein is G-type lectin S-receptor-like serine/threonine-protein kinase At2g19130.